The following is a 200-amino-acid chain: Cytochrome c biogenesis ATP-binding export protein CcmA (200 aa).

Residues 1–199 (MRLTGRGLRC…AARELRIGGA (199 aa)) form the ABC transporter domain. ATP is bound at residue 35–42 (GANGAGKT).

This sequence belongs to the ABC transporter superfamily. CcmA exporter (TC 3.A.1.107) family. As to quaternary structure, the complex is composed of two ATP-binding proteins (CcmA) and two transmembrane proteins (CcmB).

It is found in the cell inner membrane. It carries out the reaction heme b(in) + ATP + H2O = heme b(out) + ADP + phosphate + H(+). Functionally, part of the ABC transporter complex CcmAB involved in the biogenesis of c-type cytochromes; once thought to export heme, this seems not to be the case, but its exact role is uncertain. Responsible for energy coupling to the transport system. This Rhodopseudomonas palustris (strain BisB18) protein is Cytochrome c biogenesis ATP-binding export protein CcmA.